Reading from the N-terminus, the 296-residue chain is Small ribosomal subunit biogenesis GTPase RsgA (296 aa).

A CP-type G domain is found at threonine 65–leucine 226. GTP contacts are provided by residues threonine 114 to aspartate 117 and glycine 169 to serine 177. Residues cysteine 250, cysteine 255, histidine 257, and cysteine 263 each coordinate Zn(2+).

It belongs to the TRAFAC class YlqF/YawG GTPase family. RsgA subfamily. As to quaternary structure, monomer. Associates with 30S ribosomal subunit, binds 16S rRNA. Zn(2+) is required as a cofactor.

The protein resides in the cytoplasm. In terms of biological role, one of several proteins that assist in the late maturation steps of the functional core of the 30S ribosomal subunit. Helps release RbfA from mature subunits. May play a role in the assembly of ribosomal proteins into the subunit. Circularly permuted GTPase that catalyzes slow GTP hydrolysis, GTPase activity is stimulated by the 30S ribosomal subunit. This Bacillus velezensis (strain DSM 23117 / BGSC 10A6 / LMG 26770 / FZB42) (Bacillus amyloliquefaciens subsp. plantarum) protein is Small ribosomal subunit biogenesis GTPase RsgA.